The sequence spans 200 residues: MDPPSVRSKITEIEGDLFHAPDGAALIHACNCQGSWGKGIAKAFKDKYPAAFAIYRSHCQNLLSSPRYMFEPDLQSEESHARSSRDVRLPEGTALIIPPQKRDSEANGKKHWIICLFTSRGFGRAVSPPDVIVRNTELAVADMTRQLAELQTDQSSREESVGELWSCRFNAGLFGVPWERSRRVLEDAGLEVTVVRPHGG.

The Macro domain maps to M1 to G200. Substrate is bound by residues G15–L17, A29–N31, W36–A41, and F169–G175.

This sequence belongs to the POA1 family.

It carries out the reaction ADP-alpha-D-ribose 1''-phosphate + H2O = ADP-D-ribose + phosphate. Highly specific phosphatase involved in the metabolism of ADP-ribose 1''-phosphate (Appr1p) which is produced as a consequence of tRNA splicing. The sequence is that of ADP-ribose 1''-phosphate phosphatase (poa1) from Aspergillus fumigatus (strain ATCC MYA-4609 / CBS 101355 / FGSC A1100 / Af293) (Neosartorya fumigata).